The chain runs to 411 residues: Multifunctional CCA protein (411 aa).

ATP contacts are provided by G8 and R11. Residues G8 and R11 each coordinate CTP. Mg(2+)-binding residues include D21 and D23. ATP-binding residues include R91, R137, and R140. CTP contacts are provided by R91, R137, and R140. The 106-residue stretch at 228-333 (SGVHTLLVIE…LKVFNALDIW (106 aa)) folds into the HD domain.

The protein belongs to the tRNA nucleotidyltransferase/poly(A) polymerase family. Bacterial CCA-adding enzyme type 1 subfamily. As to quaternary structure, monomer. Can also form homodimers and oligomers. Mg(2+) is required as a cofactor. Ni(2+) serves as cofactor.

It carries out the reaction a tRNA precursor + 2 CTP + ATP = a tRNA with a 3' CCA end + 3 diphosphate. It catalyses the reaction a tRNA with a 3' CCA end + 2 CTP + ATP = a tRNA with a 3' CCACCA end + 3 diphosphate. Functionally, catalyzes the addition and repair of the essential 3'-terminal CCA sequence in tRNAs without using a nucleic acid template. Adds these three nucleotides in the order of C, C, and A to the tRNA nucleotide-73, using CTP and ATP as substrates and producing inorganic pyrophosphate. tRNA 3'-terminal CCA addition is required both for tRNA processing and repair. Also involved in tRNA surveillance by mediating tandem CCA addition to generate a CCACCA at the 3' terminus of unstable tRNAs. While stable tRNAs receive only 3'-terminal CCA, unstable tRNAs are marked with CCACCA and rapidly degraded. The chain is Multifunctional CCA protein from Actinobacillus pleuropneumoniae serotype 5b (strain L20).